Here is a 319-residue protein sequence, read N- to C-terminus: R-phycoerythrin gamma chain, chloroplastic (319 aa).

The transit peptide at 1–71 (MDSPAFAVTG…RPKKLASYKR (71 aa)) directs the protein to the chloroplast. Phycourobilin is bound by residues Cys96 and Cys135. Cys212 contacts (2R,3E)-phycoerythrobilin. Cys299 contributes to the phycourobilin binding site.

Heteromer of 4 alpha, 4 beta and one gamma chains. Post-translationally, contains four covalently linked bilin chromophores.

Its subcellular location is the plastid. It is found in the chloroplast thylakoid membrane. This Corallina officinalis (Coral seaweed) protein is R-phycoerythrin gamma chain, chloroplastic.